Here is a 375-residue protein sequence, read N- to C-terminus: Tyrosine--tRNA ligase (375 aa).

Residues Tyr37, Tyr168, Gln172, Asp175, and Gln190 each coordinate L-tyrosine. Positions 251 to 255 (KMSKS) match the 'KMSKS' region motif. Residue Lys254 coordinates ATP.

The protein belongs to the class-I aminoacyl-tRNA synthetase family. TyrS type 4 subfamily. As to quaternary structure, homodimer.

The protein resides in the cytoplasm. It catalyses the reaction tRNA(Tyr) + L-tyrosine + ATP = L-tyrosyl-tRNA(Tyr) + AMP + diphosphate + H(+). Its function is as follows. Catalyzes the attachment of tyrosine to tRNA(Tyr) in a two-step reaction: tyrosine is first activated by ATP to form Tyr-AMP and then transferred to the acceptor end of tRNA(Tyr). The sequence is that of Tyrosine--tRNA ligase from Thermococcus onnurineus (strain NA1).